Here is a 205-residue protein sequence, read N- to C-terminus: Small ribosomal subunit protein uS4 (205 aa).

The segment covering 1–12 (MSKRIQAKHKLD) has biased composition (basic residues). The segment at 1-49 (MSKRIQAKHKLDRRMGQNIWGRPKSPVNRREYGPGQHGQRRKGKLSDFG) is disordered. In terms of domain architecture, S4 RNA-binding spans 94-156 (RRLDAVIYRA…SKQLEIVVVA (63 aa)).

This sequence belongs to the universal ribosomal protein uS4 family. In terms of assembly, part of the 30S ribosomal subunit. Contacts protein S5. The interaction surface between S4 and S5 is involved in control of translational fidelity.

In terms of biological role, one of the primary rRNA binding proteins, it binds directly to 16S rRNA where it nucleates assembly of the body of the 30S subunit. Functionally, with S5 and S12 plays an important role in translational accuracy. The sequence is that of Small ribosomal subunit protein uS4 from Methylobacterium nodulans (strain LMG 21967 / CNCM I-2342 / ORS 2060).